Here is a 331-residue protein sequence, read N- to C-terminus: Nucleotide-binding protein SGR_5570 (331 aa).

The disordered stretch occupies residues 1-43 (MTENTHETAPNTADTDTADFDTADTDRADGAADVSTNTPNETG). 55–62 (GMSGAGRS) contributes to the ATP binding site. 106–109 (DVRG) lines the GTP pocket.

The protein belongs to the RapZ-like family.

Functionally, displays ATPase and GTPase activities. In Streptomyces griseus subsp. griseus (strain JCM 4626 / CBS 651.72 / NBRC 13350 / KCC S-0626 / ISP 5235), this protein is Nucleotide-binding protein SGR_5570.